The chain runs to 485 residues: Protein hunchback (485 aa).

Positions 1–77 (TSSTARKTPE…EEDDDIRTPK (77 aa)) are disordered. Polar residues predominate over residues 16–37 (QDQNQLLKTPIQTNGNQQSTFD). The span at 59–72 (ADVDDENDAEEDDD) shows a compositional bias: acidic residues. 4 C2H2-type zinc fingers span residues 87 to 109 (YKCK…NRIH), 116 to 138 (LKCQ…LRNH), 144 to 166 (FQCK…MKSH), and 172 to 196 (YRCK…KYSH). 3 disordered regions span residues 229-270 (KDEG…PPSS), 318-361 (NGWQ…QVKH), and 398-422 (PKPV…EDDS). The segment covering 257-270 (NFEQSQHVPTPPSS) has biased composition (polar residues). A compositionally biased stretch (acidic residues) spans 325-335 (NCNEEETPEKE). Over residues 345 to 358 (DLSSNPSTPSTVSQ) the composition is skewed to polar residues. The span at 402–416 (QLQLPTSSTTTPLKT) shows a compositional bias: low complexity. C2H2-type zinc fingers lie at residues 432-454 (YECK…MGYH) and 460-484 (FKCN…RDAH).

It belongs to the hunchback C2H2-type zinc-finger protein family.

The protein resides in the nucleus. In terms of biological role, gap class segmentation protein that controls development of head structures. This Clogmia albipunctata (Mothmidge) protein is Protein hunchback (hb).